The chain runs to 134 residues: Cytochrome b (134 aa).

3 consecutive transmembrane segments (helical) span residues phenylalanine 33–methionine 53, tryptophan 77–valine 98, and tryptophan 113–leucine 133. Heme b is bound by residues histidine 83 and histidine 97.

This sequence belongs to the cytochrome b family. The cytochrome bc1 complex contains 11 subunits: 3 respiratory subunits (MT-CYB, CYC1 and UQCRFS1), 2 core proteins (UQCRC1 and UQCRC2) and 6 low-molecular weight proteins (UQCRH/QCR6, UQCRB/QCR7, UQCRQ/QCR8, UQCR10/QCR9, UQCR11/QCR10 and a cleavage product of UQCRFS1). This cytochrome bc1 complex then forms a dimer. Heme b serves as cofactor.

The protein resides in the mitochondrion inner membrane. Its function is as follows. Component of the ubiquinol-cytochrome c reductase complex (complex III or cytochrome b-c1 complex) that is part of the mitochondrial respiratory chain. The b-c1 complex mediates electron transfer from ubiquinol to cytochrome c. Contributes to the generation of a proton gradient across the mitochondrial membrane that is then used for ATP synthesis. The protein is Cytochrome b (MT-CYB) of Chiroderma trinitatum (Little big-eyed bat).